Reading from the N-terminus, the 269-residue chain is 4-hydroxy-tetrahydrodipicolinate reductase (269 aa).

NAD(+)-binding positions include Gly11–Met16 and Glu37. Residue Arg38 coordinates NADP(+). NAD(+) contacts are provided by residues Gly101 to Thr103 and Ala125 to Met128. His158 functions as the Proton donor/acceptor in the catalytic mechanism. A (S)-2,3,4,5-tetrahydrodipicolinate-binding site is contributed by His159. The active-site Proton donor is Lys162. Residue Gly168–Thr169 coordinates (S)-2,3,4,5-tetrahydrodipicolinate.

This sequence belongs to the DapB family.

It localises to the cytoplasm. It catalyses the reaction (S)-2,3,4,5-tetrahydrodipicolinate + NAD(+) + H2O = (2S,4S)-4-hydroxy-2,3,4,5-tetrahydrodipicolinate + NADH + H(+). The enzyme catalyses (S)-2,3,4,5-tetrahydrodipicolinate + NADP(+) + H2O = (2S,4S)-4-hydroxy-2,3,4,5-tetrahydrodipicolinate + NADPH + H(+). It participates in amino-acid biosynthesis; L-lysine biosynthesis via DAP pathway; (S)-tetrahydrodipicolinate from L-aspartate: step 4/4. Its function is as follows. Catalyzes the conversion of 4-hydroxy-tetrahydrodipicolinate (HTPA) to tetrahydrodipicolinate. This is 4-hydroxy-tetrahydrodipicolinate reductase from Dinoroseobacter shibae (strain DSM 16493 / NCIMB 14021 / DFL 12).